Consider the following 33-residue polypeptide: Protein YdgV (33 aa).

The chain is Protein YdgV from Escherichia coli (strain K12).